The chain runs to 419 residues: D-amino acid dehydrogenase (419 aa).

FAD is bound at residue 3-17; sequence VLILGGGVVGVTSAY.

It belongs to the DadA oxidoreductase family. It depends on FAD as a cofactor.

The enzyme catalyses a D-alpha-amino acid + A + H2O = a 2-oxocarboxylate + AH2 + NH4(+). It functions in the pathway amino-acid degradation; D-alanine degradation; NH(3) and pyruvate from D-alanine: step 1/1. Its function is as follows. Oxidative deamination of D-amino acids. This chain is D-amino acid dehydrogenase, found in Methylobacterium radiotolerans (strain ATCC 27329 / DSM 1819 / JCM 2831 / NBRC 15690 / NCIMB 10815 / 0-1).